A 414-amino-acid polypeptide reads, in one-letter code: NADH-dependent flavin oxidoreductase iccE (414 aa).

FMN is bound by residues 25-28 and Q107; that span reads TAIA. Position 188 to 191 (188 to 191) interacts with substrate; it reads HASH. 347 to 348 is a binding site for FMN; sequence AR.

Belongs to the NADH:flavin oxidoreductase/NADH oxidase family.

The catalysed reaction is 8-epi-ilicicolin H = ilicicolin H. It functions in the pathway mycotoxin biosynthesis. Its function is as follows. NADH-dependent flavin oxidoreductase; part of the gene cluster that mediates the biosynthesis of ilicicolin H, a 4-hydroxy-2-pyridonealkaloid that has potent and broad antifungal activities by inhibiting the mitochondrial respiration chain. IccE acts as an epimerase and catalyzes the conversion of 8-epi-ilicicolin H into the final product ilicicolin H. The biosynthesis of ilicicolin H starts with formation of the tetramic acid by the hybrid PKS-NRPS synthetase iccA with the partnering trans-enoyl reductase iccB since iccA lacks a designated enoylreductase (ER) domain. The cytochrome P450 monooxygenase iccC then catalyzes the ring expansion of the tetramate to the acyclic 2-pyridone. The pericyclase iccD further converts the acyclic 2-pyridone into 8-epi-ilicicolin H. Finally, the epimerase iccE converts 8-epi-ilicicolin H into ilicicolin H via epimerization. IccA to iccE are sufficient for ilicicolin H biosynthesis and the roles of the remaining enzymes, iccF, iccG and iccH within the pathway have still to be determined. The polypeptide is NADH-dependent flavin oxidoreductase iccE (Talaromyces variabilis (Penicillium variabile)).